Consider the following 336-residue polypeptide: Type II methyltransferase M.PvuII (336 aa).

2 consecutive repeat copies span residues 11–113 (SNDM…IYNF) and 181–293 (SDRM…WISF). The disordered stretch occupies residues 196–215 (TPKTRPSGHDIGKSFSKDNG). Over residues 202-211 (SGHDIGKSFS) the composition is skewed to basic and acidic residues.

It belongs to the N(4)/N(6)-methyltransferase family. N(4) subfamily. Monomer.

The enzyme catalyses a 2'-deoxycytidine in DNA + S-adenosyl-L-methionine = an N(4)-methyl-2'-deoxycytidine in DNA + S-adenosyl-L-homocysteine + H(+). Its function is as follows. A beta subtype methylase, recognizes the double-stranded sequence 5'-CAGCTG-3', methylates C-4 on both strands, and protects the DNA from cleavage by the PvuII endonuclease. This is Type II methyltransferase M.PvuII from Proteus hauseri.